The following is a 483-amino-acid chain: tRNA sulfurtransferase (483 aa).

The THUMP domain maps to Gly-63–Lys-167. ATP contacts are provided by residues Leu-185–Ile-186, Lys-267, Gly-289, and Gln-298. Cys-346 and Cys-457 form a disulfide bridge. Positions Leu-405–Pro-483 constitute a Rhodanese domain. Cys-457 serves as the catalytic Cysteine persulfide intermediate.

The protein belongs to the ThiI family.

It localises to the cytoplasm. It carries out the reaction [ThiI sulfur-carrier protein]-S-sulfanyl-L-cysteine + a uridine in tRNA + 2 reduced [2Fe-2S]-[ferredoxin] + ATP + H(+) = [ThiI sulfur-carrier protein]-L-cysteine + a 4-thiouridine in tRNA + 2 oxidized [2Fe-2S]-[ferredoxin] + AMP + diphosphate. It catalyses the reaction [ThiS sulfur-carrier protein]-C-terminal Gly-Gly-AMP + S-sulfanyl-L-cysteinyl-[cysteine desulfurase] + AH2 = [ThiS sulfur-carrier protein]-C-terminal-Gly-aminoethanethioate + L-cysteinyl-[cysteine desulfurase] + A + AMP + 2 H(+). It participates in cofactor biosynthesis; thiamine diphosphate biosynthesis. Functionally, catalyzes the ATP-dependent transfer of a sulfur to tRNA to produce 4-thiouridine in position 8 of tRNAs, which functions as a near-UV photosensor. Also catalyzes the transfer of sulfur to the sulfur carrier protein ThiS, forming ThiS-thiocarboxylate. This is a step in the synthesis of thiazole, in the thiamine biosynthesis pathway. The sulfur is donated as persulfide by IscS. This is tRNA sulfurtransferase from Saccharophagus degradans (strain 2-40 / ATCC 43961 / DSM 17024).